We begin with the raw amino-acid sequence, 1659 residues long: Daxx-like protein (1659 aa).

2 disordered regions span residues 1–25 and 265–336; these read MSAS…RRRL and QLQQ…VRSL. A coiled-coil region spans residues 438 to 469; the sequence is LGQLQQEQQKILGQLQQQKQQQQQQQKKILGQ. Composition is skewed to low complexity over residues 506-520, 528-542, and 600-625; these read SVGQ…QSQQ, KQQP…VGQF, and GQLQ…QQQQ. Disordered stretches follow at residues 506–542, 600–645, 658–713, 872–894, 924–952, 1023–1060, and 1536–1555; these read SVGQ…VGQF, GQLQ…TLAG, SAGQ…MPQK, TLPF…HVQG, LPPT…VQQQ, VESP…QSRA, and FKIA…EDDD. A compositionally biased stretch (polar residues) spans 626–635; the sequence is KISAGQLQEH. Low complexity-rich tracts occupy residues 636–645 and 658–698; these read SQQQQKTLAG and SAGQ…QPQQ. Composition is skewed to polar residues over residues 699–711 and 885–894; these read RTSA…QQMP and APMTSTHVQG. The interval 870-1659 is necessary for interaction with His3.3A and His3.3B; it reads ARTLPFRSSQ…DQIIISDEES (790 aa). The segment covering 924 to 937 has biased composition (low complexity); sequence LPPTTSITPQLTPT. The span at 1541–1555 shows a compositional bias: acidic residues; the sequence is DGDDSEEESDSEDDD.

Interacts with p53 (via C-terminus). Interacts (via C-terminus) with His3.3A and His3.3B. Interacts with asf1. In terms of tissue distribution, ubiquitously expressed with higher levels in the head (at protein level). Expressed in the germ line, with prominent expression in primary spermatocytes and meiotic spermatocytes (at protein level). In ovaries, expressed in nurse cells and in the germinal vesicle of the ovarian follicle at stage 10 (at protein level).

It is found in the cytoplasm. Its subcellular location is the cytosol. The protein resides in the nucleus. The protein localises to the chromosome. Functionally, transcription regulator. Acts as a histone chaperone that facilitates deposition of histone H3.3. Has a role in chromatin remodeling together with asf1 and XNP. Has role in the transcriptional apoptotic response to oxidative and UV stress. In Drosophila melanogaster (Fruit fly), this protein is Daxx-like protein.